A 210-amino-acid chain; its full sequence is 2,3-bisphosphoglycerate-dependent phosphoglycerate mutase (210 aa).

Substrate contacts are provided by residues 9–16 (RHGQSEWN), 22–23 (TG), Arg61, 88–91 (ERDY), Lys99, 115–116 (RR), and 159–160 (GN). The active-site Tele-phosphohistidine intermediate is His10. The active-site Proton donor/acceptor is Glu88.

It belongs to the phosphoglycerate mutase family. BPG-dependent PGAM subfamily. As to quaternary structure, homodimer.

The catalysed reaction is (2R)-2-phosphoglycerate = (2R)-3-phosphoglycerate. Its pathway is carbohydrate degradation; glycolysis; pyruvate from D-glyceraldehyde 3-phosphate: step 3/5. In terms of biological role, catalyzes the interconversion of 2-phosphoglycerate and 3-phosphoglycerate. The sequence is that of 2,3-bisphosphoglycerate-dependent phosphoglycerate mutase from Parvibaculum lavamentivorans (strain DS-1 / DSM 13023 / NCIMB 13966).